A 357-amino-acid polypeptide reads, in one-letter code: Golgi to ER traffic protein 2 (357 aa).

The Cytoplasmic portion of the chain corresponds to 1–224; the sequence is MSETTDKQLT…AKYHTYQEQL (224 aa). The segment covering 65–81 has biased composition (low complexity); it reads TDTATVTDSSTNATSVS. The tract at residues 65 to 99 is disordered; sequence TDTATVTDSSTNATSVSPSAAKATPTSTGVSSAIS. Residues 88 to 98 are compositionally biased toward polar residues; it reads TPTSTGVSSAI. The helical transmembrane segment at 225 to 245 threads the bilayer; it reads WQFRFLVVRILATIFNFAYHF. At 246 to 270 the chain is on the lumenal side; sequence ITIPSFTASNHAYVRDLSEVYPLLG. Residues 271-290 form a helical membrane-spanning segment; the sequence is FMTIFTSIEVVIIATYYLLF. Residues 291 to 334 lie on the Cytoplasmic side of the membrane; the sequence is TKLGLFHASNQKSFILKGISTLSMFVPQLLRYEPLVATFLGYKE. Residues 335–355 form a helical membrane-spanning segment; it reads LLGIFVGDLSLVVVMFGLLSF. At 356–357 the chain is on the lumenal side; that stretch reads SN.

This sequence belongs to the GET2 family. Component of the Golgi to ER traffic (GET) complex, which is composed of GET1, GET2 and GET3. Within the complex, GET1 and GET2 form a heterotetramer which is stabilized by phosphatidylinositol binding and which binds to the GET3 homodimer.

Its subcellular location is the endoplasmic reticulum membrane. The protein resides in the golgi apparatus membrane. Its function is as follows. Required for the post-translational delivery of tail-anchored (TA) proteins to the endoplasmic reticulum. Together with GET1, acts as a membrane receptor for soluble GET3, which recognizes and selectively binds the transmembrane domain of TA proteins in the cytosol. The GET complex cooperates with the HDEL receptor ERD2 to mediate the ATP-dependent retrieval of resident ER proteins that contain a C-terminal H-D-E-L retention signal from the Golgi to the ER. The polypeptide is Golgi to ER traffic protein 2 (Lodderomyces elongisporus (strain ATCC 11503 / CBS 2605 / JCM 1781 / NBRC 1676 / NRRL YB-4239) (Yeast)).